The chain runs to 78 residues: Protein GPR15LG (78 aa).

Positions 1–24 are cleaved as a signal peptide; the sequence is MRLLALSGLLCMLLLCFCIFSSEG. 2 disulfide bridges follow: C37–C60 and C38–C57.

As to quaternary structure, interacts with SUSD2; the interaction is direct. Highly abundant in the testis, colon, eye, and tongue. Detected in the epithelial layer of the colon, but not the small intestine.

The protein localises to the secreted. Highly cationic protein that has multiple functions. Acts as a chemotactic factor that mediates lymphocytes recruitment to epithelia through binding and activation of the G-protein coupled receptor GPR15. May be a tumor suppressor; together with SUSD2 has a growth inhibitory effect on colon cancer cells which includes G1 cell cycle arrest. May regulate keratinocyte proliferation. In addition, through activation of Mas-related G protein-coupled receptors (MRGPRs) contributes to pruritogenesis by activating itch-selective sensory neurons and mast cells degranulation. In terms of biological role, has antimicrobial activity against Gram-positive bacteria, including Staphylococcus aureus and Actinomyces spec., and Mycoplasma hominis and lentivirus. This is Protein GPR15LG (Gpr15lg) from Mus musculus (Mouse).